The following is a 420-amino-acid chain: MDTKRCFANRFDDYQGSLLAGQCEEAVAPLVTSTIERILQELPPLGGGAEARGATGAGSSCQGGLYSGVAGVAYMLYHVSQSPLFAAARERYLRFAKRLIDACLRAEEWGETDADTRAAFLLGGAGVYAVATLVYHALGRPDYVQPLGKFRALCAVCAPVSFLDCGSDELFVGRAGYLCAALVLKQKLAQEVLTPTQIKAICQAILDSGKQYALKKRKPFPLMYSYYGTEYLGAAHGLSSILQMLLSYQEHLKPSDRELVWQSVDFLMEQEQNCNWPPELGETIERENELVHWCHGAPGIAYLFAKAYLISKKPQYLDTCIRCGELTWQKGLLKKGPGICHGVAGSAYVFLLLYRLTGNSKYIYRAQRFAQFLFTEEFKSGSRVLESIYSLYEGFSGTVCFLIDLLQPNQAEFPLFSVFV.

It belongs to the LanC-like protein family.

The protein is LanC-like protein 3 (Lancl3) of Mus musculus (Mouse).